Here is a 286-residue protein sequence, read N- to C-terminus: Bifunctional protein FolD (286 aa).

Residues Gly165–Ser167 and Ser190 contribute to the NADP(+) site.

The protein belongs to the tetrahydrofolate dehydrogenase/cyclohydrolase family. As to quaternary structure, homodimer.

It carries out the reaction (6R)-5,10-methylene-5,6,7,8-tetrahydrofolate + NADP(+) = (6R)-5,10-methenyltetrahydrofolate + NADPH. The catalysed reaction is (6R)-5,10-methenyltetrahydrofolate + H2O = (6R)-10-formyltetrahydrofolate + H(+). It functions in the pathway one-carbon metabolism; tetrahydrofolate interconversion. Functionally, catalyzes the oxidation of 5,10-methylenetetrahydrofolate to 5,10-methenyltetrahydrofolate and then the hydrolysis of 5,10-methenyltetrahydrofolate to 10-formyltetrahydrofolate. The chain is Bifunctional protein FolD from Staphylococcus aureus (strain JH9).